The sequence spans 332 residues: Aquaporin-7-2 (332 aa).

The segment covering 1–40 (MSGQHQITEQPSGNPLSRTSTLIQEKPLTPTSSHAGTQKQ) has biased composition (polar residues). A disordered region spans residues 1–46 (MSGQHQITEQPSGNPLSRTSTLIQEKPLTPTSSHAGTQKQPEAPRQ). The Cytoplasmic portion of the chain corresponds to 1–66 (MSGQHQITEQ…RHAIRKPMAE (66 aa)). Residues 67-87 (FFGVALLIIFGAGSACQVVLS) form a helical membrane-spanning segment. Residues 88 to 100 (TNPDVASSARGSF) lie on the Extracellular side of the membrane. The helical transmembrane segment at 101 to 121 (LSINFGWAIGIAMGVWVSGGI) threads the bilayer. Over 122-144 (SGGHINPAITIAMATYRGFPWCK) the chain is Cytoplasmic. The NPA 1 motif lies at 127-129 (NPA). The helical transmembrane segment at 145–165 (VPSYILAQVLGGVVGAALVYA) threads the bilayer. Topologically, residues 166–199 (NYIHAIDVFEGGHHIRTEATASLFATYALPYMTQ) are extracellular. A helical membrane pass occupies residues 200 to 220 (ASCFFSEFLATAVLSMMVFAL). Residues 221-230 (TDKRNHSPTN) are Cytoplasmic-facing. Residues 231–251 (GLLPFALFILFVGLGASLGME) traverse the membrane as a helical segment. Topologically, residues 252 to 283 (TAYALNPARDFGPRLFLAMAGYGKALFNYRSQ) are extracellular. The NPA 2 motif lies at 257–259 (NPA). The helical transmembrane segment at 284 to 304 (YWLWAPIIAPVLGAQAGGLLY) threads the bilayer. Residues 305 to 332 (DTFLNDGDNSPIKWRCASSQEQQLAEVV) are Cytoplasmic-facing.

The protein belongs to the MIP/aquaporin (TC 1.A.8) family.

It is found in the membrane. It carries out the reaction H2O(in) = H2O(out). In terms of biological role, water channel required to facilitate the transport of water across membranes. Does not mediate the transport carbon dioxide across the membrane. The chain is Aquaporin-7-2 from Laccaria bicolor (Bicoloured deceiver).